Consider the following 49-residue polypeptide: Large ribosomal subunit protein bL33 (49 aa).

It belongs to the bacterial ribosomal protein bL33 family.

This chain is Large ribosomal subunit protein bL33, found in Syntrophus aciditrophicus (strain SB).